The chain runs to 146 residues: UPF0742 protein SPAC977.02 (146 aa).

A helical transmembrane segment spans residues 38-60 (LTVKYCLAVKLLIYLLYCWYIYS).

This sequence belongs to the UPF0742 family.

The protein localises to the cytoplasm. Its subcellular location is the nucleus membrane. The protein is UPF0742 protein SPAC977.02 of Schizosaccharomyces pombe (strain 972 / ATCC 24843) (Fission yeast).